The following is a 429-amino-acid chain: TNF receptor-associated factor family protein DDB_G0267744 (429 aa).

An RING-type; degenerate zinc finger spans residues 22–60 (CVICSHLQVDIYQCVEGHFACKNCFLKMIELKKQCMTCR). 2 consecutive TRAF-type zinc fingers follow at residues 151 to 203 (HHLK…GEFN) and 204 to 265 (NHQD…SNSE).

This sequence belongs to the TNF receptor-associated factor family.

Its subcellular location is the cytoplasm. In terms of biological role, probable adapter protein and signal transducer that links members of the tumor necrosis factor receptor family to different signaling pathways by association with the receptor cytoplasmic domain and kinases. In Dictyostelium discoideum (Social amoeba), this protein is TNF receptor-associated factor family protein DDB_G0267744.